The following is a 205-amino-acid chain: Listeria nuclear targeted protein A (205 aa).

An N-terminal signal peptide occupies residues 1–36 (MKKLVAWFNGLSKMWKVVVIIGAVFVVIIALTTGED).

As to quaternary structure, interacts specifically with host BAHD1.

It localises to the secreted. The protein resides in the host nucleus. Relieves the repression of host cell immune response genes (interferon-stimulated genes) by blocking the recruitment of host BAHD1 to these genes. May modulate interferon-mediated immune response to control bacterial colonization of the host. This Listeria monocytogenes serovar 1/2a (strain ATCC BAA-679 / EGD-e) protein is Listeria nuclear targeted protein A (lntA).